The chain runs to 398 residues: Na(+)/H(+) antiporter NhaA (398 aa).

Transmembrane regions (helical) follow at residues 14 to 34 (AAGV…NWSV), 60 to 80 (LLLW…GLEV), 96 to 116 (MLPL…FLLF), 125 to 145 (VGWA…LTLL), 155 to 175 (VFLL…IALF), 179 to 199 (QIFW…AYLN), 214 to 234 (IVLW…GVIV), 263 to 283 (FLII…GIVL), 292 to 312 (LGIA…LSWL), 330 to 350 (IVAV…ITLL), and 362 to 382 (YAKL…YLAL).

The protein belongs to the NhaA Na(+)/H(+) (TC 2.A.33) antiporter family.

The protein localises to the cell inner membrane. It catalyses the reaction Na(+)(in) + 2 H(+)(out) = Na(+)(out) + 2 H(+)(in). Its function is as follows. Na(+)/H(+) antiporter that extrudes sodium in exchange for external protons. The sequence is that of Na(+)/H(+) antiporter NhaA from Pectobacterium carotovorum subsp. carotovorum (strain PC1).